The following is a 354-amino-acid chain: Dihydroorotate dehydrogenase (quinone) (354 aa).

FMN-binding positions include 70–74 (AGFDK) and Thr94. Lys74 serves as a coordination point for substrate. 119 to 123 (NAMGF) contacts substrate. Residues Asn148 and Asn181 each coordinate FMN. Asn181 contacts substrate. Ser184 (nucleophile) is an active-site residue. Asn186 contacts substrate. The FMN site is built by Lys217 and Thr245. 246–247 (NT) contacts substrate. FMN-binding positions include Gly265, Gly294, and 315-316 (YS).

This sequence belongs to the dihydroorotate dehydrogenase family. Type 2 subfamily. As to quaternary structure, monomer. It depends on FMN as a cofactor.

The protein resides in the cell membrane. The enzyme catalyses (S)-dihydroorotate + a quinone = orotate + a quinol. Its pathway is pyrimidine metabolism; UMP biosynthesis via de novo pathway; orotate from (S)-dihydroorotate (quinone route): step 1/1. In terms of biological role, catalyzes the conversion of dihydroorotate to orotate with quinone as electron acceptor. This is Dihydroorotate dehydrogenase (quinone) from Sulfurovum sp. (strain NBC37-1).